The following is a 339-amino-acid chain: Type IV secretion system protein PtlH homolog (339 aa).

It belongs to the GSP E family.

The sequence is that of Type IV secretion system protein PtlH homolog (ptlH) from Bordetella parapertussis (strain 12822 / ATCC BAA-587 / NCTC 13253).